The chain runs to 315 residues: Methionyl-tRNA formyltransferase (315 aa).

113–116 (SLLP) is a binding site for (6S)-5,6,7,8-tetrahydrofolate.

The protein belongs to the Fmt family.

It carries out the reaction L-methionyl-tRNA(fMet) + (6R)-10-formyltetrahydrofolate = N-formyl-L-methionyl-tRNA(fMet) + (6S)-5,6,7,8-tetrahydrofolate + H(+). Functionally, attaches a formyl group to the free amino group of methionyl-tRNA(fMet). The formyl group appears to play a dual role in the initiator identity of N-formylmethionyl-tRNA by promoting its recognition by IF2 and preventing the misappropriation of this tRNA by the elongation apparatus. This Escherichia coli (strain SMS-3-5 / SECEC) protein is Methionyl-tRNA formyltransferase.